A 402-amino-acid chain; its full sequence is Phosphomevalonate dehydratase large subunit (402 aa).

(R)-5-phosphomevalonate-binding residues include Gly48, Ala49, Ser50, Asn79, and Pro80. Cys122 contacts [4Fe-4S] cluster. (R)-5-phosphomevalonate is bound by residues Glu145 and Ser146. [4Fe-4S] cluster contacts are provided by Cys297 and Cys356. Lys377 is a (R)-5-phosphomevalonate binding site.

Belongs to the AcnX type II large subunit family. As to quaternary structure, heterodimer composed of a large subunit (PMDh-L) and a small subunit (PMDh-S). [4Fe-4S] cluster serves as cofactor.

The enzyme catalyses (R)-5-phosphomevalonate = (2E)-3-methyl-5-phosphooxypent-2-enoate + H2O. Its pathway is isoprenoid biosynthesis; isopentenyl diphosphate biosynthesis via mevalonate pathway. Its activity is regulated as follows. Neither the addition of 1 mM Mg(2+) nor 1 mM Mn(2+) has a significant effect on the activity, whereas Zn(2+) causes almost complete inactivation. Strongly inhibited by H(2)O(2), but not by EDTA or iodoacetamide. Functionally, component of a hydro-lyase that catalyzes the dehydration of mevalonate 5-phosphate (MVA5P) to form trans-anhydromevalonate 5-phosphate (tAHMP). Involved in the archaeal mevalonate (MVA) pathway, which provides fundamental precursors for isoprenoid biosynthesis, such as isopentenyl diphosphate (IPP) and dimethylallyl diphosphate (DMAPP). This Aeropyrum pernix (strain ATCC 700893 / DSM 11879 / JCM 9820 / NBRC 100138 / K1) protein is Phosphomevalonate dehydratase large subunit.